A 429-amino-acid polypeptide reads, in one-letter code: Inositol-3-phosphate synthase 1 (429 aa).

Residues 12-32 traverse the membrane as a helical segment; the sequence is LGVLVVGVGGAVATTMIVGTL. A22, V23, D79, A116, A165, T167, Y201, S244, R276, D277, and K290 together coordinate NAD(+).

Belongs to the myo-inositol 1-phosphate synthase family. Homotetramer. Requires NAD(+) as cofactor.

Its subcellular location is the membrane. The catalysed reaction is D-glucose 6-phosphate = 1D-myo-inositol 3-phosphate. It functions in the pathway polyol metabolism; myo-inositol biosynthesis; myo-inositol from D-glucose 6-phosphate: step 1/2. Key enzyme in myo-inositol biosynthesis pathway that catalyzes the conversion of glucose 6-phosphate to 1D-myo-inositol 3-phosphate in a NAD-dependent manner. The polypeptide is Inositol-3-phosphate synthase 1 (Bacteroides thetaiotaomicron (strain ATCC 29148 / DSM 2079 / JCM 5827 / CCUG 10774 / NCTC 10582 / VPI-5482 / E50)).